A 204-amino-acid polypeptide reads, in one-letter code: MVSLKTGILGGTFDPIHTGHLILADEVKNRLGLDEVIFIPTGQPYYKADKTISPAEDRLNMVKLAISDKPYFRVMDIEIKRSGPTYTADTLNDLKTILPEKTELYFMLGWDNLEALPRWHKASEIIRLCRLVAAPRIGQVKPDVDELDDKLPGLQQSLILLSKPEVDISSSLVRERVENGQGVEHLVPAAVASYIKKHNLYCRK.

This sequence belongs to the NadD family.

It catalyses the reaction nicotinate beta-D-ribonucleotide + ATP + H(+) = deamido-NAD(+) + diphosphate. The protein operates within cofactor biosynthesis; NAD(+) biosynthesis; deamido-NAD(+) from nicotinate D-ribonucleotide: step 1/1. Its function is as follows. Catalyzes the reversible adenylation of nicotinate mononucleotide (NaMN) to nicotinic acid adenine dinucleotide (NaAD). The polypeptide is Probable nicotinate-nucleotide adenylyltransferase (Dehalococcoides mccartyi (strain ATCC BAA-2100 / JCM 16839 / KCTC 5957 / BAV1)).